Consider the following 419-residue polypeptide: MYKLIINGGIALNGHVKTAGSKNSSLPILFASILANGPITLTNTPHLSDVSTTLRLLMDMGAEFILESDNSLFIDSSNLTNLVAQYNLVKTMRASILALGPMLAKYCKAKISLPGGCAIGSRPVNLHLKALEDLGAFIKVENGYIYATAKKLIGTEIHFDQISVTATENIIMAATLATGITTIYNAAQEPEIVDLINCLIKMGAKISGAGTSIITIEGVDELSGVTYAVCPDRIEAGTYLVAATITGGKITIKNVCYQSMRAILVKLLETGADIKTEKNSITLDMKGKRPKAVNIKTSTYPNFPTDMQAQFTALNAIADGYSTITETIFENRFMHIPELSRMGASLVLEGNTVVCKGVKSLTGAYLMATDLRASASLVLAGLAAIGTTTIERVYHLDRGYEMIEEKLKLLGAQIERVQD.

Position 22 to 23 (22 to 23) interacts with phosphoenolpyruvate; the sequence is KN. Residue R93 coordinates UDP-N-acetyl-alpha-D-glucosamine. The active-site Proton donor is the C117. C117 carries the 2-(S-cysteinyl)pyruvic acid O-phosphothioketal modification. Residues D306 and I328 each coordinate UDP-N-acetyl-alpha-D-glucosamine.

Belongs to the EPSP synthase family. MurA subfamily.

Its subcellular location is the cytoplasm. It catalyses the reaction phosphoenolpyruvate + UDP-N-acetyl-alpha-D-glucosamine = UDP-N-acetyl-3-O-(1-carboxyvinyl)-alpha-D-glucosamine + phosphate. It participates in cell wall biogenesis; peptidoglycan biosynthesis. Cell wall formation. Adds enolpyruvyl to UDP-N-acetylglucosamine. The protein is UDP-N-acetylglucosamine 1-carboxyvinyltransferase of Ruthia magnifica subsp. Calyptogena magnifica.